We begin with the raw amino-acid sequence, 356 residues long: UDP-N-acetylglucosamine--N-acetylmuramyl-(pentapeptide) pyrophosphoryl-undecaprenol N-acetylglucosamine transferase (356 aa).

UDP-N-acetyl-alpha-D-glucosamine is bound by residues R166, S196, and Q290.

The protein belongs to the glycosyltransferase 28 family. MurG subfamily.

The protein resides in the cell membrane. It catalyses the reaction Mur2Ac(oyl-L-Ala-gamma-D-Glu-L-Lys-D-Ala-D-Ala)-di-trans,octa-cis-undecaprenyl diphosphate + UDP-N-acetyl-alpha-D-glucosamine = beta-D-GlcNAc-(1-&gt;4)-Mur2Ac(oyl-L-Ala-gamma-D-Glu-L-Lys-D-Ala-D-Ala)-di-trans,octa-cis-undecaprenyl diphosphate + UDP + H(+). The protein operates within cell wall biogenesis; peptidoglycan biosynthesis. Cell wall formation. Catalyzes the transfer of a GlcNAc subunit on undecaprenyl-pyrophosphoryl-MurNAc-pentapeptide (lipid intermediate I) to form undecaprenyl-pyrophosphoryl-MurNAc-(pentapeptide)GlcNAc (lipid intermediate II). The polypeptide is UDP-N-acetylglucosamine--N-acetylmuramyl-(pentapeptide) pyrophosphoryl-undecaprenol N-acetylglucosamine transferase (Staphylococcus aureus (strain MW2)).